The sequence spans 416 residues: Pectin acetylesterase 10 (416 aa).

Residues 1–20 (MRKLFLLGFIVAGLVLGNEA) form the signal peptide. The N-linked (GlcNAc...) asparagine glycan is linked to asparagine 27. Residues serine 198, aspartate 294, and histidine 361 each act as charge relay system in the active site.

Belongs to the pectinacetylesterase family.

It localises to the secreted. The protein resides in the cell wall. Hydrolyzes acetyl esters in homogalacturonan regions of pectin. In type I primary cell wall, galacturonic acid residues of pectin can be acetylated at the O-2 and O-3 positions. Decreasing the degree of acetylation of pectin gels in vitro alters their physical properties. This chain is Pectin acetylesterase 10, found in Arabidopsis thaliana (Mouse-ear cress).